Here is a 347-residue protein sequence, read N- to C-terminus: Fused nickel transport protein NikMN (347 aa).

Transmembrane regions (helical) follow at residues 6 to 26 (GYLS…FWYV), 40 to 60 (LPLV…NLPI), 73 to 93 (IAAV…ALLI), 96 to 116 (IFFG…MAVV), 140 to 160 (VIMA…LAAV), 185 to 205 (VAVP…EFIV), 236 to 256 (LWAG…AAGT), 273 to 293 (AAMA…GGFA), and 319 to 339 (VLSA…SAGL).

It belongs to the CbiM family. NikM subfamily. As to quaternary structure, forms an energy-coupling factor (ECF) transporter complex composed of an ATP-binding protein (A component, NikO), a transmembrane protein (T component, NikQ) and a fused possible substrate-capture protein (S component, NikMN) of unknown stoichimetry.

It localises to the cell inner membrane. In terms of biological role, part of the energy-coupling factor (ECF) transporter complex NikMNQO involved in nickel import. The complex confers nickel uptake upon expression in E.coli; can also transport cobalt with a very low affinity. This is Fused nickel transport protein NikMN (nikMN) from Rhodobacter capsulatus (strain ATCC BAA-309 / NBRC 16581 / SB1003).